The chain runs to 332 residues: 2,3-diketo-L-gulonate reductase (332 aa).

The Proton donor role is filled by H44. Residues 168 to 174 (ITMVDMS), 224 to 225 (WK), and 304 to 306 (GHE) contribute to the NAD(+) site.

It belongs to the LDH2/MDH2 oxidoreductase family. DlgD subfamily. Homodimer.

It localises to the cytoplasm. The catalysed reaction is 3-dehydro-L-gulonate + NAD(+) = 2,3-dioxo-L-gulonate + NADH + H(+). The enzyme catalyses 3-dehydro-L-gulonate + NADP(+) = 2,3-dioxo-L-gulonate + NADPH + H(+). Its function is as follows. Catalyzes the reduction of 2,3-diketo-L-gulonate in the presence of NADH, to form 3-keto-L-gulonate. In Escherichia coli O1:K1 / APEC, this protein is 2,3-diketo-L-gulonate reductase.